A 254-amino-acid chain; its full sequence is HTH-type transcriptional regulator GlvR (254 aa).

The HTH rpiR-type domain occupies Met-1–Glu-77. A DNA-binding region (H-T-H motif) is located at residues Ile-37–Gln-56. The SIS domain occupies Met-106–Ala-248.

Its function is as follows. Positive regulator of the glv operon expression, which consists of GlvA, GlvR and GlvC. In Bacillus subtilis (strain 168), this protein is HTH-type transcriptional regulator GlvR (glvR).